A 123-amino-acid chain; its full sequence is Small ribosomal subunit protein uS13 (123 aa).

Residues 93 to 123 (RRNLPVRGQKTKTNARTRKGPKRAIGGKKKK) form a disordered region.

Belongs to the universal ribosomal protein uS13 family. In terms of assembly, part of the 30S ribosomal subunit. Forms a loose heterodimer with protein S19. Forms two bridges to the 50S subunit in the 70S ribosome.

Its function is as follows. Located at the top of the head of the 30S subunit, it contacts several helices of the 16S rRNA. In the 70S ribosome it contacts the 23S rRNA (bridge B1a) and protein L5 of the 50S subunit (bridge B1b), connecting the 2 subunits; these bridges are implicated in subunit movement. Contacts the tRNAs in the A and P-sites. The protein is Small ribosomal subunit protein uS13 of Clostridium botulinum (strain Loch Maree / Type A3).